The sequence spans 340 residues: Dof zinc finger protein DOF2.2 (340 aa).

Residues 12–33 (PPINWPQSANPNNHPHHHQLQE) form a disordered region. Residues 94–148 (LKCPRCDSANTKFCYFNNYNLTQPRHFCKACRRYWTRGGALRNVPVGGGCRRNKK) form a Dof-type zinc finger. Cys96, Cys99, Cys121, and Cys124 together coordinate Zn(2+). Disordered regions lie at residues 138 to 180 (PVGG…TSNV) and 301 to 340 (GNIS…QHLM). Residues 151-165 (SGNSKSSSSSQNKQS) are compositionally biased toward low complexity. Composition is skewed to polar residues over residues 166–180 (TSMV…TSNV) and 309–331 (GLTS…GSSS).

It localises to the nucleus. In terms of biological role, transcription factor that binds specifically to a 5'-AA[AG]G-3' consensus core sequence. This is Dof zinc finger protein DOF2.2 (DOF2.2) from Arabidopsis thaliana (Mouse-ear cress).